Consider the following 600-residue polypeptide: Aspartate--tRNA(Asp/Asn) ligase (600 aa).

Position 174 (glutamate 174) interacts with L-aspartate. The aspartate stretch occupies residues 198–201 (QLFK). Residue arginine 220 participates in L-aspartate binding. ATP contacts are provided by residues 220-222 (RDE) and glutamine 229. Histidine 457 is a binding site for L-aspartate. ATP is bound at residue glutamate 491. Arginine 498 contributes to the L-aspartate binding site. 543 to 546 (GLDR) provides a ligand contact to ATP.

The protein belongs to the class-II aminoacyl-tRNA synthetase family. Type 1 subfamily. As to quaternary structure, homodimer.

The protein resides in the cytoplasm. The catalysed reaction is tRNA(Asx) + L-aspartate + ATP = L-aspartyl-tRNA(Asx) + AMP + diphosphate. Functionally, aspartyl-tRNA synthetase with relaxed tRNA specificity since it is able to aspartylate not only its cognate tRNA(Asp) but also tRNA(Asn). Reaction proceeds in two steps: L-aspartate is first activated by ATP to form Asp-AMP and then transferred to the acceptor end of tRNA(Asp/Asn). The chain is Aspartate--tRNA(Asp/Asn) ligase from Burkholderia cenocepacia (strain ATCC BAA-245 / DSM 16553 / LMG 16656 / NCTC 13227 / J2315 / CF5610) (Burkholderia cepacia (strain J2315)).